The primary structure comprises 806 residues: Cell cycle progression protein 1 (806 aa).

Topologically, residues 1–216 (MSENSSDSDS…KRQFSSGLNK (216 aa)) are cytoplasmic. The interaction with MCF2L and SRC stretch occupies residues 1–307 (MSENSSDSDS…QKTNLATENQ (307 aa)). Disordered stretches follow at residues 80–105 (SSTIEAEEEKIPEDNIYIGTASDDSD) and 152–207 (VFSS…KESK). Over residues 175-184 (FRRRRARKKT) the composition is skewed to basic residues. Position 186 is a phosphoserine (serine 186). The segment covering 190-207 (SEDRLVAEQETEPSKESK) has biased composition (basic and acidic residues). Residues 217–237 (CVILALVIAVSMGFGHFYGTI) form a helical; Signal-anchor for type II membrane protein membrane-spanning segment. The Lumenal segment spans residues 238 to 806 (QIQKRQQLVR…LGQLPFDPQY (569 aa)). Residues 305 to 449 (ENQYLRVSLE…EQQRSDLWER (145 aa)) are a coiled coil. A compositionally biased stretch (basic and acidic residues) spans 457–467 (QSGKQETDGKK). The disordered stretch occupies residues 457–478 (QSGKQETDGKKKVGRGNHRAKN). Residues 468-478 (KVGRGNHRAKN) show a composition bias toward basic residues. Residues 503-529 (VRHHKEKIKQAKEAVKENLKKFSDSVK) are a coiled coil. Residues 758–778 (SRHRKQEQKHLQPQPYKREGK) are disordered.

It belongs to the CCPG1 family. In terms of assembly, interacts with MCF2L. May interact with MCF2, ARHGEF1, BCR, VAV1 and FGD1, but not with TIAM1. Interacts with GTP-bound CDC42 and SRC.

Its subcellular location is the cytoplasmic granule membrane. In terms of biological role, acts as an assembly platform for Rho protein signaling complexes. Limits guanine nucleotide exchange activity of MCF2L toward RHOA, which results in an inhibition of both its transcriptional activation ability and its transforming activity. Does not inhibit activity of MCF2L toward CDC42, or activity of MCF2 toward either RHOA or CDC42. May be involved in cell cycle regulation. The protein is Cell cycle progression protein 1 (CCPG1) of Pongo abelii (Sumatran orangutan).